The sequence spans 155 residues: uncharacterized protein (155 aa).

A helical transmembrane segment spans residues 5 to 25; that stretch reads GIIICVGIAFLIFIFLWAYFK.

The protein resides in the membrane. This is an uncharacterized protein from Acheta domesticus (House cricket).